The following is a 212-amino-acid chain: Ribonuclease HII (212 aa).

In terms of domain architecture, RNase H type-2 spans 20–209; sequence TCIVGVDEVG…VHNILYQEAS (190 aa). Residues aspartate 26, glutamate 27, and aspartate 117 each contribute to the a divalent metal cation site.

Belongs to the RNase HII family. Requires Mn(2+) as cofactor. Mg(2+) serves as cofactor.

It localises to the cytoplasm. It carries out the reaction Endonucleolytic cleavage to 5'-phosphomonoester.. Functionally, endonuclease that specifically degrades the RNA of RNA-DNA hybrids. This Cereibacter sphaeroides (strain ATCC 17025 / ATH 2.4.3) (Rhodobacter sphaeroides) protein is Ribonuclease HII.